We begin with the raw amino-acid sequence, 1130 residues long: 3-hydroxy-3-methylglutaryl-coenzyme A reductase 1 (1130 aa).

Over 1–46 (MATSLITRKLRSAEATNDVEPGWLKRQVTGVLQSISSHACQHPIHT) the chain is Cytoplasmic. The chain crosses the membrane as a helical span at residues 47–67 (IVVIALLASTTYVGLLEGSLF). Residues 68-242 (DSVRNSRNIA…DLIKHAETID (175 aa)) are Lumenal-facing. N148 carries an N-linked (GlcNAc...) asparagine glycan. Residues 242–415 (DIVIMTLGYL…FTFYTTILCI (174 aa)) form the SSD domain. A helical membrane pass occupies residues 243-263 (IVIMTLGYLSMHLSFVSLFFS). Over 264–270 (MRRLGSN) the chain is Cytoplasmic. Residues 271–291 (FWLAATVLFSGVFAFLFGLLV) form a helical membrane-spanning segment. The Lumenal portion of the chain corresponds to 292–296 (TTKLG). A helical transmembrane segment spans residues 297-317 (VPINVLLLSEGLPFLVVTIGF). At 318 to 366 (EKPIILTRAVLTAAADNRGRAGQASSSTTKSIQDSIQTAIKEQGFEIIR) the chain is on the cytoplasmic side. Residues 367–387 (DYCIEIAILIAGAASGVQGGL) traverse the membrane as a helical segment. Residues 388 to 389 (RQ) lie on the Lumenal side of the membrane. A helical transmembrane segment spans residues 390–410 (FCFLAAWILFFDCVLLFTFYT). At 411 to 476 (TILCIKLEIN…RKLRSSSVRR (66 aa)) the chain is on the cytoplasmic side. The chain crosses the membrane as a helical span at residues 477–497 (FKILMVGGFVLVNVVNLSTIP). Residues 498 to 601 (FRDSSQGAGL…ESLLKSIEDP (104 aa)) are Lumenal-facing. Residues 602 to 622 (IISKWIIAALTLSIILNGYLF) form a helical membrane-spanning segment. At 623 to 1130 (NAARWSIKEP…ARGLTMSSSE (508 aa)) the chain is on the cytoplasmic side. The active-site Charge relay system is the E792. 798–804 (STSRGAK) lines the CoA pocket. NADP(+) contacts are provided by residues 859–861 (SRF) and 886–894 (DAMGMNMIS). The Charge relay system role is filled by K926. 955-957 (VLK) is a CoA binding site. D1002 functions as the Charge relay system in the catalytic mechanism. Residue 1097 to 1098 (AH) coordinates CoA. Catalysis depends on H1098, which acts as the Proton donor. Residue 1102 to 1103 (NR) participates in NADP(+) binding. Low complexity predominate over residues 1103 to 1122 (RSAATTRTSTPVSAAVSAAR). Positions 1103 to 1130 (RSAATTRTSTPVSAAVSAARGLTMSSSE) are disordered.

It belongs to the HMG-CoA reductase family.

It is found in the endoplasmic reticulum membrane. The enzyme catalyses (R)-mevalonate + 2 NADP(+) + CoA = (3S)-3-hydroxy-3-methylglutaryl-CoA + 2 NADPH + 2 H(+). Its pathway is metabolic intermediate biosynthesis; (R)-mevalonate biosynthesis; (R)-mevalonate from acetyl-CoA: step 3/3. Its function is as follows. HMG-CoA reductase; part of the first module of ergosterol biosynthesis pathway that includes the early steps of the pathway, conserved across all eukaryotes, and which results in the formation of mevalonate from acetyl-coenzyme A (acetyl-CoA). Hmg1 and hmg2 catalyze the reduction of hydroxymethylglutaryl-CoA (HMG-CoA) to mevalonate. The first module starts with the action of the cytosolic acetyl-CoA acetyltransferase erg10B that catalyzes the formation of acetoacetyl-CoA. The hydroxymethylglutaryl-CoA synthases erg13A and erg13B then condense acetyl-CoA with acetoacetyl-CoA to form HMG-CoA. The rate-limiting step of the early module is the reduction to mevalonate by the 3-hydroxy-3-methylglutaryl-coenzyme A (HMG-CoA) reductases hmg1 and hmg2. Mevalonate is also a precursor for the extracellular siderophore triacetylfusarinine C (TAFC). The sequence is that of 3-hydroxy-3-methylglutaryl-coenzyme A reductase 1 from Aspergillus fumigatus (strain ATCC MYA-4609 / CBS 101355 / FGSC A1100 / Af293) (Neosartorya fumigata).